The chain runs to 856 residues: DNA mismatch repair protein MutS (856 aa).

An ATP-binding site is contributed by 600–607 (GPNMSGKS).

This sequence belongs to the DNA mismatch repair MutS family.

Functionally, this protein is involved in the repair of mismatches in DNA. It is possible that it carries out the mismatch recognition step. This protein has a weak ATPase activity. This chain is DNA mismatch repair protein MutS, found in Lactobacillus acidophilus (strain ATCC 700396 / NCK56 / N2 / NCFM).